The following is a 286-amino-acid chain: Uridylate cyclase (286 aa).

One can recognise a Guanylate cyclase domain in the interval 90-223 (TAIFVDIRKS…DAVTKAANMS (134 aa)). Phenylalanine 93 is an a ribonucleoside 5'-triphosphate binding site. 3 residues coordinate Mn(2+): aspartate 95, isoleucine 96, and aspartate 140.

This sequence belongs to the adenylyl cyclase class-4/guanylyl cyclase family. Pyrimidine cyclase subfamily. As to quaternary structure, homodimer. The cofactor is Mn(2+).

The protein localises to the cytoplasm. The enzyme catalyses UTP = 3',5'-cyclic UMP + diphosphate. Its function is as follows. Pycsar (pyrimidine cyclase system for antiphage resistance) provides immunity against bacteriophage. The pyrimidine cyclase (PycC) synthesizes cyclic nucleotides in response to infection; these serve as specific second messenger signals. The signals activate the adjacent effector, leading to bacterial cell death and abortive phage infection. A clade C Pycsar system. Functionally, the pyrimidine cyclase gene of a two-gene Pycsar system, weakly generates cyclic UMP (cUMP) from UTP, has little to no activity on ATP, CTP or GTP. Expression of this and adjacent effector TpPycTM (AC A0A1T4LJG1) probably confers resistance to bacteriophage. The genes are probably only expressed in response to bacteriophage infection. The chain is Uridylate cyclase from Treponema porcinum.